A 145-amino-acid chain; its full sequence is Large ribosomal subunit protein uL11 (145 aa).

This sequence belongs to the universal ribosomal protein uL11 family. As to quaternary structure, part of the ribosomal stalk of the 50S ribosomal subunit. Interacts with L10 and the large rRNA to form the base of the stalk. L10 forms an elongated spine to which L12 dimers bind in a sequential fashion forming a multimeric L10(L12)X complex. In terms of processing, one or more lysine residues are methylated.

In terms of biological role, forms part of the ribosomal stalk which helps the ribosome interact with GTP-bound translation factors. This chain is Large ribosomal subunit protein uL11, found in Coxiella burnetii (strain Dugway 5J108-111).